The primary structure comprises 330 residues: Ketol-acid reductoisomerase (NADP(+)) (330 aa).

One can recognise a KARI N-terminal Rossmann domain in the interval 1–181 (MKVFYDSDFK…GLSRAGVIQT (181 aa)). NADP(+) is bound by residues 24–27 (YGSQ), R47, S52, and 82–85 (DELQ). Residue H107 is part of the active site. G133 provides a ligand contact to NADP(+). One can recognise a KARI C-terminal knotted domain in the interval 182–327 (TFKEETETDL…AKLRKMCGLE (146 aa)). Mg(2+) contacts are provided by D190, E194, E226, and E230. Residue S251 coordinates substrate.

It belongs to the ketol-acid reductoisomerase family. Mg(2+) is required as a cofactor.

The enzyme catalyses (2R)-2,3-dihydroxy-3-methylbutanoate + NADP(+) = (2S)-2-acetolactate + NADPH + H(+). It catalyses the reaction (2R,3R)-2,3-dihydroxy-3-methylpentanoate + NADP(+) = (S)-2-ethyl-2-hydroxy-3-oxobutanoate + NADPH + H(+). It participates in amino-acid biosynthesis; L-isoleucine biosynthesis; L-isoleucine from 2-oxobutanoate: step 2/4. Its pathway is amino-acid biosynthesis; L-valine biosynthesis; L-valine from pyruvate: step 2/4. Its function is as follows. Involved in the biosynthesis of branched-chain amino acids (BCAA). Catalyzes an alkyl-migration followed by a ketol-acid reduction of (S)-2-acetolactate (S2AL) to yield (R)-2,3-dihydroxy-isovalerate. In the isomerase reaction, S2AL is rearranged via a Mg-dependent methyl migration to produce 3-hydroxy-3-methyl-2-ketobutyrate (HMKB). In the reductase reaction, this 2-ketoacid undergoes a metal-dependent reduction by NADPH to yield (R)-2,3-dihydroxy-isovalerate. In Methanococcus maripaludis (strain C6 / ATCC BAA-1332), this protein is Ketol-acid reductoisomerase (NADP(+)).